The following is a 330-amino-acid chain: MGRDYYIFSNGRIKRKENTIYFEDFEGNKKGLPIEDIERLHIFGEVDLNTKFLNYISRYSVLISIYNYYGFYSGSYYSKKKNVSGVLLVNQALAYDNYEFRVAIAKTFIDSAMHHILRNLRRYKEKTSEFVKAIENERKIMKEAKTIEEVMGAEGRARKKYYESYNAFLKFLKNDFHFNKREKKPPNDPINALISFGNSMMYTTVLGEIYKTQLDPTISYLHEPSTKRFSLSLDLAEIFKPLIVDSVIFNMINKGMIKKSDFDTDEGICYLNENGRKKFIKEYENKLSTTVRHRTLNRNVSYRELIRLECYKLIKMLLGDEDYKPLKAWW.

Mn(2+) contacts are provided by Glu154, His222, and Glu237.

This sequence belongs to the CRISPR-associated endonuclease Cas1 family. In terms of assembly, homodimer, forms a heterotetramer with a Cas2 homodimer. Requires Mg(2+) as cofactor. It depends on Mn(2+) as a cofactor.

Its function is as follows. CRISPR (clustered regularly interspaced short palindromic repeat), is an adaptive immune system that provides protection against mobile genetic elements (viruses, transposable elements and conjugative plasmids). CRISPR clusters contain spacers, sequences complementary to antecedent mobile elements, and target invading nucleic acids. CRISPR clusters are transcribed and processed into CRISPR RNA (crRNA). Acts as a dsDNA endonuclease. Involved in the integration of spacer DNA into the CRISPR cassette. The protein is CRISPR-associated endonuclease Cas1 of Clostridium perfringens (strain SM101 / Type A).